Consider the following 377-residue polypeptide: DNA replication and repair protein RecF (377 aa).

30–37 serves as a coordination point for ATP; it reads GLNGSGKT.

The protein belongs to the RecF family.

It is found in the cytoplasm. In terms of biological role, the RecF protein is involved in DNA metabolism; it is required for DNA replication and normal SOS inducibility. RecF binds preferentially to single-stranded, linear DNA. It also seems to bind ATP. This Cytophaga hutchinsonii (strain ATCC 33406 / DSM 1761 / CIP 103989 / NBRC 15051 / NCIMB 9469 / D465) protein is DNA replication and repair protein RecF.